A 622-amino-acid chain; its full sequence is Threonine--tRNA ligase (622 aa).

Residues 1 to 141 are editing domain; it reads MKTLLIHSDY…SRKITTERKE (141 aa). The tract at residues 199–498 is catalytic; it reads PHVKYIKEKE…TLENKPPALP (300 aa). The Zn(2+) site is built by C291, H343, and H467.

This sequence belongs to the class-II aminoacyl-tRNA synthetase family. In terms of assembly, homodimer. The cofactor is Zn(2+).

Its subcellular location is the cytoplasm. It carries out the reaction tRNA(Thr) + L-threonine + ATP = L-threonyl-tRNA(Thr) + AMP + diphosphate + H(+). In terms of biological role, catalyzes the attachment of threonine to tRNA(Thr) in a two-step reaction: L-threonine is first activated by ATP to form Thr-AMP and then transferred to the acceptor end of tRNA(Thr). Also edits incorrectly charged L-seryl-tRNA(Thr). The polypeptide is Threonine--tRNA ligase (Methanococcus maripaludis (strain C5 / ATCC BAA-1333)).